We begin with the raw amino-acid sequence, 263 residues long: 3-deoxy-manno-octulosonate cytidylyltransferase 1 (263 aa).

It belongs to the KdsB family.

The protein localises to the cytoplasm. It catalyses the reaction 3-deoxy-alpha-D-manno-oct-2-ulosonate + CTP = CMP-3-deoxy-beta-D-manno-octulosonate + diphosphate. It functions in the pathway nucleotide-sugar biosynthesis; CMP-3-deoxy-D-manno-octulosonate biosynthesis; CMP-3-deoxy-D-manno-octulosonate from 3-deoxy-D-manno-octulosonate and CTP: step 1/1. It participates in bacterial outer membrane biogenesis; lipopolysaccharide biosynthesis. Functionally, activates KDO (a required 8-carbon sugar) for incorporation into bacterial lipopolysaccharide in Gram-negative bacteria. This chain is 3-deoxy-manno-octulosonate cytidylyltransferase 1, found in Burkholderia ambifaria (strain ATCC BAA-244 / DSM 16087 / CCUG 44356 / LMG 19182 / AMMD) (Burkholderia cepacia (strain AMMD)).